Here is a 376-residue protein sequence, read N- to C-terminus: Protein-glutamate methylesterase/protein-glutamine glutaminase (376 aa).

The Response regulatory domain occupies Lys4–Leu121. The residue at position 55 (Asp55) is a 4-aspartylphosphate. Residues Ser142 to Ser161 form a disordered region. The segment covering Ser145–Ser161 has biased composition (low complexity). Positions Thr183–Lys376 constitute a CheB-type methylesterase domain. Catalysis depends on residues Ser195, His222, and Asp318.

It belongs to the CheB family. Phosphorylated by CheA. Phosphorylation of the N-terminal regulatory domain activates the methylesterase activity.

It localises to the cytoplasm. It catalyses the reaction [protein]-L-glutamate 5-O-methyl ester + H2O = L-glutamyl-[protein] + methanol + H(+). The catalysed reaction is L-glutaminyl-[protein] + H2O = L-glutamyl-[protein] + NH4(+). Involved in chemotaxis. Part of a chemotaxis signal transduction system that modulates chemotaxis in response to various stimuli. Catalyzes the demethylation of specific methylglutamate residues introduced into the chemoreceptors (methyl-accepting chemotaxis proteins or MCP) by CheR. Also mediates the irreversible deamidation of specific glutamine residues to glutamic acid. The sequence is that of Protein-glutamate methylesterase/protein-glutamine glutaminase from Aliivibrio fischeri (strain ATCC 700601 / ES114) (Vibrio fischeri).